A 401-amino-acid polypeptide reads, in one-letter code: Probable tRNA sulfurtransferase (401 aa).

Residues 63 to 168 (TTAEQALSCL…EREAFLYGAR (106 aa)) enclose the THUMP domain. Residues 186–187 (LL), 211–212 (YF), arginine 268, glycine 290, and glutamine 299 each bind ATP.

This sequence belongs to the ThiI family.

It localises to the cytoplasm. It catalyses the reaction [ThiI sulfur-carrier protein]-S-sulfanyl-L-cysteine + a uridine in tRNA + 2 reduced [2Fe-2S]-[ferredoxin] + ATP + H(+) = [ThiI sulfur-carrier protein]-L-cysteine + a 4-thiouridine in tRNA + 2 oxidized [2Fe-2S]-[ferredoxin] + AMP + diphosphate. The catalysed reaction is [ThiS sulfur-carrier protein]-C-terminal Gly-Gly-AMP + S-sulfanyl-L-cysteinyl-[cysteine desulfurase] + AH2 = [ThiS sulfur-carrier protein]-C-terminal-Gly-aminoethanethioate + L-cysteinyl-[cysteine desulfurase] + A + AMP + 2 H(+). Its pathway is cofactor biosynthesis; thiamine diphosphate biosynthesis. Its function is as follows. Catalyzes the ATP-dependent transfer of a sulfur to tRNA to produce 4-thiouridine in position 8 of tRNAs, which functions as a near-UV photosensor. Also catalyzes the transfer of sulfur to the sulfur carrier protein ThiS, forming ThiS-thiocarboxylate. This is a step in the synthesis of thiazole, in the thiamine biosynthesis pathway. The sulfur is donated as persulfide by IscS. This is Probable tRNA sulfurtransferase from Treponema pallidum subsp. pallidum (strain SS14).